Consider the following 429-residue polypeptide: Adenylosuccinate synthetase (429 aa).

Residues 12 to 18 and 40 to 42 each bind GTP; these read GDEGKGK and GHT. Residue Asp-13 is the Proton acceptor of the active site. Residues Asp-13 and Gly-40 each contribute to the Mg(2+) site. IMP contacts are provided by residues 13–16, 38–41, Thr-128, Arg-142, Gln-223, Thr-238, and Arg-302; these read DEGK and NAGH. The active-site Proton donor is His-41. Residue 298 to 304 coordinates substrate; sequence TTTGRPR. GTP is bound by residues Arg-304, 330–332, and 412–414; these read SID and SVG.

It belongs to the adenylosuccinate synthetase family. As to quaternary structure, homodimer. The cofactor is Mg(2+).

Its subcellular location is the cytoplasm. It catalyses the reaction IMP + L-aspartate + GTP = N(6)-(1,2-dicarboxyethyl)-AMP + GDP + phosphate + 2 H(+). It participates in purine metabolism; AMP biosynthesis via de novo pathway; AMP from IMP: step 1/2. In terms of biological role, plays an important role in the de novo pathway of purine nucleotide biosynthesis. Catalyzes the first committed step in the biosynthesis of AMP from IMP. The sequence is that of Adenylosuccinate synthetase from Bacillus cereus (strain ZK / E33L).